A 556-amino-acid chain; its full sequence is Calcium-dependent protein kinase 5 (556 aa).

The tract at residues 1–40 is disordered; it reads MGNSCRGSFKDKLDEGDNNKPEDYSKTSTTNLSSNSDHSP. Glycine 2 is lipidated: N-myristoyl glycine. Basic and acidic residues predominate over residues 8 to 25; it reads SFKDKLDEGDNNKPEDYS. The segment covering 26–39 has biased composition (low complexity); the sequence is KTSTTNLSSNSDHS. In terms of domain architecture, Protein kinase spans 97 to 355; that stretch reads YTLSRKLGQG…AHEVLRHPWI (259 aa). ATP-binding positions include 103–111 and lysine 126; that span reads LGQGQFGTT. The active-site Proton acceptor is aspartate 221. Serine 261 carries the phosphoserine modification. Residues 361–391 are autoinhibitory domain; the sequence is APDRALDPAVLSRLKQFSAMNKLKKMALKVI. EF-hand domains follow at residues 398 to 433, 434 to 469, 470 to 505, and 509 to 539; these read EEIAGLREMFQAMDTDNSGAITFDELKAGLRKYGST, LKDTEIHDLMDAADVDNSGTIDYSEFIAATIHLNKL, EREEHLVAAFQYFDKDGSGFITIDELQQACVEHGMA, and LEDIIKEVDQNNDGKIDYGEFVEMMQKGNAG. Ca(2+) is bound by residues aspartate 411, aspartate 413, serine 415, glutamate 422, aspartate 447, aspartate 449, serine 451, threonine 453, glutamate 458, aspartate 483, aspartate 485, serine 487, glutamate 494, aspartate 517, asparagine 519, aspartate 521, lysine 523, and glutamate 528.

It belongs to the protein kinase superfamily. Ser/Thr protein kinase family. CDPK subfamily.

Its subcellular location is the membrane. It catalyses the reaction L-seryl-[protein] + ATP = O-phospho-L-seryl-[protein] + ADP + H(+). The catalysed reaction is L-threonyl-[protein] + ATP = O-phospho-L-threonyl-[protein] + ADP + H(+). With respect to regulation, activated by calcium. Autophosphorylation may play an important role in the regulation of the kinase activity. In terms of biological role, may play a role in signal transduction pathways that involve calcium as a second messenger. The polypeptide is Calcium-dependent protein kinase 5 (CPK5) (Arabidopsis thaliana (Mouse-ear cress)).